Here is a 330-residue protein sequence, read N- to C-terminus: MQTLAQHLTSKAVNESLSQLILTLADTSKAISHAVRHGALAGVLGATEQENVQGETQKKLDIITNDMLKDALKADGTVRGLASEEEDHVVEVCANGQYLVCFDPLDGSSNIDINSLVGTIFSVLPAPQGELTETSFLQSGRNQLAAGYVLYGPSTMLALTTGQGVQLFTLHPETNEFLLTNAAMSISPDTQEFAINMSNQRFWEAPMQTYIADLLLGKIGPREKSFNMRWIAAMVGDVHRVLSRGGIFTYPTDNKDPKKPYKLRLMYEANPMALLVEQAGGKASTGYETILDIQPTQIHQRVAVILGSANEVDACLSYHGLDYSEEPSLD.

E84, D103, L105, and D106 together coordinate Mg(2+). Substrate is bound by residues D106–S109, N196, and K262. Residue E268 coordinates Mg(2+).

It belongs to the FBPase class 1 family. As to quaternary structure, homotetramer. It depends on Mg(2+) as a cofactor.

Its subcellular location is the cytoplasm. It catalyses the reaction beta-D-fructose 1,6-bisphosphate + H2O = beta-D-fructose 6-phosphate + phosphate. Its pathway is carbohydrate biosynthesis; gluconeogenesis. This chain is Fructose-1,6-bisphosphatase class 1, found in Shewanella sp. (strain ANA-3).